Reading from the N-terminus, the 353-residue chain is Photosystem II D2 protein (353 aa).

Thr2 is subject to N-acetylthreonine. Thr2 carries the post-translational modification Phosphothreonine. The chain crosses the membrane as a helical span at residues 41–61; the sequence is CAYFALGGWFTGTTFVTSWYT. His118 contributes to the chlorophyll a binding site. The helical transmembrane segment at 125-141 threads the bilayer; it reads GFMLRQFELARSVQLRP. Gln130 and Asn143 together coordinate pheophytin a. Residues 153-166 traverse the membrane as a helical segment; sequence VFVSVFLIYPLGQS. Chlorophyll a is bound at residue His198. Residues 208 to 228 traverse the membrane as a helical segment; that stretch reads AALLCAIHGATVENTLFEDGD. Positions 215 and 262 each coordinate a plastoquinone. Fe cation is bound at residue His215. His269 lines the Fe cation pocket. A helical membrane pass occupies residues 279–295; the sequence is GLWMSAIGVVGLALNLR.

It belongs to the reaction center PufL/M/PsbA/D family. As to quaternary structure, PSII is composed of 1 copy each of membrane proteins PsbA, PsbB, PsbC, PsbD, PsbE, PsbF, PsbH, PsbI, PsbJ, PsbK, PsbL, PsbM, PsbT, PsbX, PsbY, PsbZ, Psb30/Ycf12, at least 3 peripheral proteins of the oxygen-evolving complex and a large number of cofactors. It forms dimeric complexes. The D1/D2 heterodimer binds P680, chlorophylls that are the primary electron donor of PSII, and subsequent electron acceptors. It shares a non-heme iron and each subunit binds pheophytin, quinone, additional chlorophylls, carotenoids and lipids. There is also a Cl(-1) ion associated with D1 and D2, which is required for oxygen evolution. The PSII complex binds additional chlorophylls, carotenoids and specific lipids. is required as a cofactor.

The protein localises to the plastid. The protein resides in the chloroplast thylakoid membrane. The catalysed reaction is 2 a plastoquinone + 4 hnu + 2 H2O = 2 a plastoquinol + O2. In terms of biological role, photosystem II (PSII) is a light-driven water:plastoquinone oxidoreductase that uses light energy to abstract electrons from H(2)O, generating O(2) and a proton gradient subsequently used for ATP formation. It consists of a core antenna complex that captures photons, and an electron transfer chain that converts photonic excitation into a charge separation. The D1/D2 (PsbA/PsbD) reaction center heterodimer binds P680, the primary electron donor of PSII as well as several subsequent electron acceptors. D2 is needed for assembly of a stable PSII complex. The sequence is that of Photosystem II D2 protein from Pinus thunbergii (Japanese black pine).